The following is a 177-amino-acid chain: Nucleoside triphosphate/diphosphate phosphatase (177 aa).

Arginine 23 (proton donor) is an active-site residue. 6 residues coordinate Mg(2+): asparagine 87, aspartate 103, aspartate 105, aspartate 107, aspartate 120, and glutamate 123.

It belongs to the Ntdp family. Mg(2+) serves as cofactor.

It catalyses the reaction a ribonucleoside 5'-triphosphate + H2O = a ribonucleoside 5'-diphosphate + phosphate + H(+). It carries out the reaction a ribonucleoside 5'-diphosphate + H2O = a ribonucleoside 5'-phosphate + phosphate + H(+). Has nucleoside phosphatase activity towards nucleoside triphosphates and nucleoside diphosphates. The chain is Nucleoside triphosphate/diphosphate phosphatase from Streptococcus pneumoniae (strain ATCC 700669 / Spain 23F-1).